The primary structure comprises 670 residues: Serine/threonine-rich protein adg2 (670 aa).

The signal sequence occupies residues 1–19; sequence MRRLTISGLLISLAKLCAG. N-linked (GlcNAc...) asparagine glycosylation is found at Asn77, Asn159, Asn204, Asn224, Asn274, Asn297, Asn327, Asn351, Asn370, Asn381, Asn405, Asn424, Asn435, Asn459, Asn478, Asn489, and Asn513. A disordered region spans residues 526-651; that stretch reads GSVSSFSSSP…MSLPPSAGSS (126 aa).

Its subcellular location is the secreted. It is found in the endoplasmic reticulum. The sequence is that of Serine/threonine-rich protein adg2 (adg2) from Schizosaccharomyces pombe (strain 972 / ATCC 24843) (Fission yeast).